The chain runs to 1336 residues: DNA-directed RNA polymerase subunit beta' (1336 aa).

Residues Cys-60, Cys-62, Cys-75, and Cys-78 each contribute to the Zn(2+) site. Residues Asp-535, Asp-537, and Asp-539 each contribute to the Mg(2+) site. Cys-902, Cys-984, Cys-991, and Cys-994 together coordinate Zn(2+).

The protein belongs to the RNA polymerase beta' chain family. The RNAP catalytic core consists of 2 alpha, 1 beta, 1 beta' and 1 omega subunit. When a sigma factor is associated with the core the holoenzyme is formed, which can initiate transcription. The cofactor is Mg(2+). Zn(2+) is required as a cofactor.

The catalysed reaction is RNA(n) + a ribonucleoside 5'-triphosphate = RNA(n+1) + diphosphate. In terms of biological role, DNA-dependent RNA polymerase catalyzes the transcription of DNA into RNA using the four ribonucleoside triphosphates as substrates. This chain is DNA-directed RNA polymerase subunit beta', found in Corynebacterium diphtheriae (strain ATCC 700971 / NCTC 13129 / Biotype gravis).